Reading from the N-terminus, the 216-residue chain is Ribosome maturation factor RimP (216 aa).

The protein belongs to the RimP family.

Its subcellular location is the cytoplasm. Required for maturation of 30S ribosomal subunits. The chain is Ribosome maturation factor RimP from Bartonella quintana (strain Toulouse) (Rochalimaea quintana).